A 258-amino-acid chain; its full sequence is Acyl-[acyl-carrier-protein]--UDP-N-acetylglucosamine O-acyltransferase (258 aa).

Belongs to the transferase hexapeptide repeat family. LpxA subfamily. In terms of assembly, homotrimer.

The protein resides in the cytoplasm. The catalysed reaction is a (3R)-hydroxyacyl-[ACP] + UDP-N-acetyl-alpha-D-glucosamine = a UDP-3-O-[(3R)-3-hydroxyacyl]-N-acetyl-alpha-D-glucosamine + holo-[ACP]. Its pathway is glycolipid biosynthesis; lipid IV(A) biosynthesis; lipid IV(A) from (3R)-3-hydroxytetradecanoyl-[acyl-carrier-protein] and UDP-N-acetyl-alpha-D-glucosamine: step 1/6. Involved in the biosynthesis of lipid A, a phosphorylated glycolipid that anchors the lipopolysaccharide to the outer membrane of the cell. This Alkalilimnicola ehrlichii (strain ATCC BAA-1101 / DSM 17681 / MLHE-1) protein is Acyl-[acyl-carrier-protein]--UDP-N-acetylglucosamine O-acyltransferase.